The chain runs to 790 residues: IQ motif and ubiquitin-like domain-containing protein (790 aa).

Residues 1–17 (MSNQPKKYETQNIANST) are compositionally biased toward polar residues. The segment at 1–49 (MSNQPKKYETQNIANSTEESDAFDIVTIPVPSEEPQESDQTEEHESGIE) is disordered. In terms of domain architecture, Ubiquitin-like spans 130-206 (ATVKVVLIPV…IQVEIFSTNP (77 aa)). The region spanning 337 to 366 (RLKAVIVIQTYYRQWHAKIFVEDLRRQKSL) is the IQ domain.

As to quaternary structure, component of the axonemal radial spoke 1 (RS1) complex, at least composed of spoke head proteins RSPH1, RSPH3, RSPH9 and the cilia-specific component RSPH4A or sperm-specific component RSPH6A, spoke stalk proteins RSPH14, DNAJB13, DYDC1, ROPN1L and NME5, and the anchor protein IQUB. Does not appear to be part of radial spoke complexes 2 or 3 (RS2 or RS3). Interacts with CALM1. Interacts with DNAJB13. Interacts with DYNLL2. Interacts with NME5. Interacts with RSPH3. Interacts with RSPH9. Interacts with ZMYND10. Interacts with calmodulin; the interaction occurs in conditions of low but not high calcium.

Its subcellular location is the cytoplasm. The protein resides in the cytoskeleton. It localises to the flagellum axoneme. It is found in the cell projection. The protein localises to the cilium. In terms of biological role, adapter protein that anchors the radial spoke 1 (RS1) complex to the A microtubule of outer doublet microtubules in axonemes. The triple radial spokes (RS1, RS2 and RS3) are required to modulate beating of the sperm flagellum. May play a role in inhibiting signaling via MAPK1/ERK2 and MAPK3/ERK1. Additionally, may play a role in the functioning of cilia. Not required for the functioning of tracheal or ependymal cilia. This chain is IQ motif and ubiquitin-like domain-containing protein (IQUB), found in Macaca fascicularis (Crab-eating macaque).